A 416-amino-acid polypeptide reads, in one-letter code: MSKLKYFFPDSQDFIDPSFDFVRETRNEHRVRQRDDHYPHEVFPHPYDGMLVSKAVVDGLGGGESKYTRAQRLRYFRNGMKHFFRLPDNMQTMGDCGAFTYVNQDVPPYRVEEVIEFYETSRFNYGVSLDHIIFGYEKPGESFSGEVLAECRRRQDITLTLAQDFLVKSQKSCFTPFGVAHGWNKKSYRQSVEALLAMGYKNITMGGMVPLKTAQILETLEEIKPLLKSDTQVHLLGIARPESFADFIRLGVTSIDSTTPLQQAFKDRKNNYHTPEGRAYTAVRVPQFDANPSLSRKIKSGVIDQDVARHLEKDAMHALFEYDNNALSLEKTLEAVLAYERLHSGEKEAEKIRADYERTLGDRPWRKCECNICRSIGINVIIFRGAERNRRRGFHNIQVLYNRLQYTLSLRSEDKS.

Aspartate 95 functions as the Proton acceptor in the catalytic mechanism. The active-site Nucleophile is aspartate 256. Zn(2+)-binding residues include cysteine 368, cysteine 370, cysteine 373, and histidine 395.

Belongs to the DNA-guanine transglycosylase family. Zn(2+) serves as cofactor.

Its function is as follows. Part of the dpd cluster involved in the insertion of 7-deazaguanine derivatives in DNA. DpdA may insert 7-cyano-7-deazaguanine (preQ0) into DNA with the help of DpdB. DpdA and dpdB are necessary and sufficient to synthesize 2'-deoxy-7-cyano-7-deazaguanosine (dPreQ0). This is DNA-guanine transglycosylase from Salmonella montevideo.